Here is a 383-residue protein sequence, read N- to C-terminus: Dephospho-CoA kinase (383 aa).

A DPCK domain is found at 3–201 (RIGLTGGMGA…RRLVPFERNL (199 aa)). 11 to 16 (GAGKST) provides a ligand contact to ATP. Positions 196–383 (PFERNLRAAT…EVAERLLGTV (188 aa)) are UPF0157.

It in the N-terminal section; belongs to the CoaE family. The protein in the C-terminal section; belongs to the UPF0157 (GrpB) family.

It is found in the cytoplasm. It carries out the reaction 3'-dephospho-CoA + ATP = ADP + CoA + H(+). It participates in cofactor biosynthesis; coenzyme A biosynthesis; CoA from (R)-pantothenate: step 5/5. In terms of biological role, catalyzes the phosphorylation of the 3'-hydroxyl group of dephosphocoenzyme A to form coenzyme A. The protein is Dephospho-CoA kinase of Nocardia farcinica (strain IFM 10152).